A 40-amino-acid polypeptide reads, in one-letter code: Dolichyl-diphosphooligosaccharide--protein glycosyltransferase subunit 4 (40 aa).

At 1–4 (MITD) the chain is on the lumenal side. Residues 5 to 25 (VQLAIFSNVLGVFLFLLVVAY) form a helical membrane-spanning segment. The Cytoplasmic portion of the chain corresponds to 26-40 (HYINANTGKPSAKAK).

This sequence belongs to the OST4 family. Component of the oligosaccharyltransferase (OST) complex.

The protein localises to the endoplasmic reticulum membrane. Its function is as follows. Subunit of the oligosaccharyl transferase (OST) complex that catalyzes the initial transfer of a defined glycan (Glc(3)Man(9)GlcNAc(2) in eukaryotes) from the lipid carrier dolichol-pyrophosphate to an asparagine residue within an Asn-X-Ser/Thr consensus motif in nascent polypeptide chains, the first step in protein N-glycosylation. N-glycosylation occurs cotranslationally and the complex associates with the Sec61 complex at the channel-forming translocon complex that mediates protein translocation across the endoplasmic reticulum (ER). All subunits are required for a maximal enzyme activity. The chain is Dolichyl-diphosphooligosaccharide--protein glycosyltransferase subunit 4 from Drosophila erecta (Fruit fly).